The primary structure comprises 944 residues: Neutral alpha-glucosidase AB (944 aa).

A signal peptide spans 1-32; sequence MAAIAAVAARRRRSWLSLVLAYLGVCLGITLA. The cysteines at positions 41 and 47 are disulfide-linked. S52 carries the phosphoserine modification. N97 is a glycosylation site (N-linked (GlcNAc...) asparagine). Positions 180 to 238 are disordered; it reads HQRAPRVPQESKDPAEGNGAQPEATPGDGDKPEETQEKAEKDEPGAWEETFKTHSDSKP. The segment covering 207 to 236 has biased composition (basic and acidic residues); the sequence is DGDKPEETQEKAEKDEPGAWEETFKTHSDS. Residues D283 and D429 each coordinate substrate. The Nucleophile role is filled by D542. Residue R602 participates in substrate binding. The Proton donor role is filled by D618. A disulfide bond links C633 and C644. H676 serves as a coordination point for substrate.

It belongs to the glycosyl hydrolase 31 family. As to quaternary structure, heterodimer of a catalytic alpha subunit (GANAB) and a beta subunit (PRKCSH). Binds glycosylated PTPRC.

The protein localises to the endoplasmic reticulum. Its subcellular location is the golgi apparatus. It localises to the melanosome. The enzyme catalyses N(4)-(alpha-D-Glc-(1-&gt;3)-alpha-D-Man-(1-&gt;2)-alpha-D-Man-(1-&gt;2)-alpha-D-Man-(1-&gt;3)-[alpha-D-Man-(1-&gt;2)-alpha-D-Man-(1-&gt;3)-[alpha-D-Man-(1-&gt;2)-alpha-D-Man-(1-&gt;6)]-alpha-D-Man-(1-&gt;6)]-beta-D-Man-(1-&gt;4)-beta-D-GlcNAc-(1-&gt;4)-beta-D-GlcNAc)-L-asparaginyl-[protein] + H2O = N(4)-(alpha-D-Man-(1-&gt;2)-alpha-D-Man-(1-&gt;2)-alpha-D-Man-(1-&gt;3)-[alpha-D-Man-(1-&gt;2)-alpha-D-Man-(1-&gt;3)-[alpha-D-Man-(1-&gt;2)-alpha-D-Man-(1-&gt;6)]-alpha-D-Man-(1-&gt;6)]-beta-D-Man-(1-&gt;4)-beta-D-GlcNAc-(1-&gt;4)-beta-D-GlcNAc)-L-asparaginyl-[protein] (N-glucan mannose isomer 9A1,2,3B1,2,3) + beta-D-glucose. It carries out the reaction N(4)-(alpha-D-Glc-(1-&gt;3)-alpha-D-Glc-(1-&gt;3)-alpha-D-Man-(1-&gt;2)-alpha-D-Man-(1-&gt;2)-alpha-D-Man-(1-&gt;3)-[alpha-D-Man-(1-&gt;2)-alpha-D-Man-(1-&gt;3)-[alpha-D-Man-(1-&gt;2)-alpha-D-Man-(1-&gt;6)]-alpha-D-Man-(1-&gt;6)]-beta-D-Man-(1-&gt;4)-beta-D-GlcNAc-(1-&gt;4)-beta-D-GlcNAc)-L-asparaginyl-[protein] + H2O = N(4)-(alpha-D-Glc-(1-&gt;3)-alpha-D-Man-(1-&gt;2)-alpha-D-Man-(1-&gt;2)-alpha-D-Man-(1-&gt;3)-[alpha-D-Man-(1-&gt;2)-alpha-D-Man-(1-&gt;3)-[alpha-D-Man-(1-&gt;2)-alpha-D-Man-(1-&gt;6)]-alpha-D-Man-(1-&gt;6)]-beta-D-Man-(1-&gt;4)-beta-D-GlcNAc-(1-&gt;4)-beta-D-GlcNAc)-L-asparaginyl-[protein] + beta-D-glucose. Its pathway is glycan metabolism; N-glycan metabolism. In terms of biological role, catalytic subunit of glucosidase II that cleaves sequentially the 2 innermost alpha-1,3-linked glucose residues from the Glc(2)Man(9)GlcNAc(2) oligosaccharide precursor of immature glycoproteins. Required for PKD1/Polycystin-1 and PKD2/Polycystin-2 maturation and localization to the cell surface and cilia. In Mus musculus (Mouse), this protein is Neutral alpha-glucosidase AB.